A 248-amino-acid chain; its full sequence is tRNA (guanine-N(1)-)-methyltransferase (248 aa).

S-adenosyl-L-methionine is bound by residues glycine 113 and 133-138 (IGDFVL).

Belongs to the RNA methyltransferase TrmD family. In terms of assembly, homodimer.

It localises to the cytoplasm. It carries out the reaction guanosine(37) in tRNA + S-adenosyl-L-methionine = N(1)-methylguanosine(37) in tRNA + S-adenosyl-L-homocysteine + H(+). Its function is as follows. Specifically methylates guanosine-37 in various tRNAs. This is tRNA (guanine-N(1)-)-methyltransferase from Dehalococcoides mccartyi (strain CBDB1).